The following is a 292-amino-acid chain: Protease HtpX (292 aa).

A run of 2 helical transmembrane segments spans residues 5-25 (IFLFLLTNVAVLMLAGVVMSV) and 34-54 (SGLLVMAAIFGFGGSFISLLL). A Zn(2+)-binding site is contributed by His-140. The active site involves Glu-141. Position 144 (His-144) interacts with Zn(2+). 2 helical membrane-spanning segments follow: residues 155-175 (LLQGVLNTFVIVLARVVGGII) and 193-213 (IIVFALEMVFGMFATMIAMWF). Glu-218 is a Zn(2+) binding site.

This sequence belongs to the peptidase M48B family. Zn(2+) serves as cofactor.

It localises to the cell inner membrane. The polypeptide is Protease HtpX (Xanthomonas oryzae pv. oryzae (strain PXO99A)).